We begin with the raw amino-acid sequence, 610 residues long: UvrABC system protein C (610 aa).

The 79-residue stretch at 16 to 94 (SQPGVYRMYD…IKLYQPRYNV (79 aa)) folds into the GIY-YIG domain. Residues 204 to 239 (QQVLHQLIERMENASKALNFEEAARIRDQIQAVRRV) enclose the UVR domain.

The protein belongs to the UvrC family. Interacts with UvrB in an incision complex.

It localises to the cytoplasm. The UvrABC repair system catalyzes the recognition and processing of DNA lesions. UvrC both incises the 5' and 3' sides of the lesion. The N-terminal half is responsible for the 3' incision and the C-terminal half is responsible for the 5' incision. The protein is UvrABC system protein C of Serratia proteamaculans (strain 568).